The following is a 203-amino-acid chain: METLTSRQRTVLEFITAHVDRHGYPPTMREIARHLNVNGTLGVAKHLEALARKGYLQREPGNSRGITLTGQTRHTPTVSLPVIGVVRAGVPQIATEEIEEHISIDQSLVKGGAFFLRVKGDSMINAAIIEGDLALVRPQQTAENRDIVVAMIDGEATLKRFYQGADHIRLQPENPNMAPIIVRSGVQEAWIIGKVVGIYRRMD.

Residues 28–48 (MREIARHLNVNGTLGVAKHLE) constitute a DNA-binding region (H-T-H motif). Catalysis depends on for autocatalytic cleavage activity residues S122 and K159.

It belongs to the peptidase S24 family. As to quaternary structure, homodimer.

It catalyses the reaction Hydrolysis of Ala-|-Gly bond in repressor LexA.. Its function is as follows. Represses a number of genes involved in the response to DNA damage (SOS response), including recA and lexA. In the presence of single-stranded DNA, RecA interacts with LexA causing an autocatalytic cleavage which disrupts the DNA-binding part of LexA, leading to derepression of the SOS regulon and eventually DNA repair. This Geobacter sulfurreducens (strain ATCC 51573 / DSM 12127 / PCA) protein is LexA repressor 2.